A 257-amino-acid polypeptide reads, in one-letter code: tRNA (guanine-N(7)-)-methyltransferase (257 aa).

Over residues methionine 1–threonine 12 the composition is skewed to acidic residues. A disordered region spans residues methionine 1–serine 25. S-adenosyl-L-methionine contacts are provided by residues glycine 80, glutamate 103 to isoleucine 104, asparagine 138 to alanine 139, and leucine 158. The active site involves aspartate 161. Serine 236–glutamate 238 lines the S-adenosyl-L-methionine pocket.

It belongs to the class I-like SAM-binding methyltransferase superfamily. TrmB family.

Its subcellular location is the nucleus. It catalyses the reaction guanosine(46) in tRNA + S-adenosyl-L-methionine = N(7)-methylguanosine(46) in tRNA + S-adenosyl-L-homocysteine. The protein operates within tRNA modification; N(7)-methylguanine-tRNA biosynthesis. Functionally, catalyzes the formation of N(7)-methylguanine at position 46 (m7G46) in tRNA. The sequence is that of tRNA (guanine-N(7)-)-methyltransferase from Drosophila ananassae (Fruit fly).